We begin with the raw amino-acid sequence, 248 residues long: Pulmonary surfactant-associated protein A (248 aa).

An N-terminal signal peptide occupies residues 1 to 17 (MWLRCLALALTLLMVSG). N-linked (GlcNAc...) asparagine glycosylation occurs at Asn20. A Collagen-like domain is found at 28–100 (GNPGIPGTPG…PGERGPPGLP (73 aa)). The disordered stretch occupies residues 29-103 (NPGIPGTPGS…RGPPGLPASL (75 aa)). 4-hydroxyproline is present on residues Pro30, Pro33, Pro36, Pro42, Pro54, Pro57, Pro63, Pro67, and Pro70. A compositionally biased stretch (basic and acidic residues) spans 42–51 (PGRDGRDGVK). Over residues 54–65 (PGPPGPLGPPGG) the composition is skewed to pro residues. A compositionally biased stretch (basic and acidic residues) spans 84–93 (ERGEKGEPGE). The region spanning 132-248 (LVVGRKVFSS…LQYRLAICEF (117 aa)) is the C-type lectin domain. 2 cysteine pairs are disulfide-bonded: Cys155-Cys246 and Cys224-Cys238. A glycan (N-linked (GlcNAc...) asparagine) is linked at Asn207. Positions 215, 217, and 234 each coordinate Ca(2+).

The protein belongs to the SFTPA family. In terms of assembly, oligomeric complex of 6 set of homotrimers.

The protein localises to the secreted. The protein resides in the extracellular space. It is found in the extracellular matrix. It localises to the surface film. In presence of calcium ions, it binds to surfactant phospholipids and contributes to lower the surface tension at the air-liquid interface in the alveoli of the mammalian lung and is essential for normal respiration. Enhances the expression of MYO18A/SP-R210 on alveolar macrophages. This chain is Pulmonary surfactant-associated protein A (SFTPA1), found in Canis lupus familiaris (Dog).